A 701-amino-acid chain; its full sequence is Heterodisulfide reductase subunit A-like protein (701 aa).

152–175 (GGGIAGIFAALDIANAGYKVYLVE) is an FAD binding site. In terms of domain architecture, 4Fe-4S ferredoxin-type 1 spans 239 to 268 (KQTWVDWDLCTGCGACTDVCPPKARVPDEF). The [4Fe-4S] cluster site is built by Cys-248, Cys-251, Cys-254, Cys-326, Cys-627, Cys-630, Cys-633, Cys-637, Cys-660, Cys-663, Cys-666, and Cys-670. 4Fe-4S ferredoxin-type domains lie at 618–647 (LVSEVDKEKCSGCGICVPLCPYGAITMTKY) and 651–680 (MRAEINPALCKGCGVCAAACPSKAIKLHGF).

Belongs to the HdrA family. In terms of assembly, the heterodisulfide reductase is composed of three subunits; HdlA, HdlB and HdlC. It forms a complex with the F420-non-reducing hydrogenase (Mvh), which provides the reducing equivalents to the heterodisulfide reductase. It depends on [4Fe-4S] cluster as a cofactor. FAD is required as a cofactor.

The protein resides in the cytoplasm. Has oxidoreductase activity. The Hdl and Mvh subunits may together mediate electron transfer from hydrogen to an unidentified electron acceptor on the cytoplasmic side of the membrane. The polypeptide is Heterodisulfide reductase subunit A-like protein (hdlA) (Archaeoglobus profundus (strain DSM 5631 / JCM 9629 / NBRC 100127 / Av18)).